Reading from the N-terminus, the 37-residue chain is Cytochrome b6-f complex subunit 5 (37 aa).

Residues 5 to 25 (LLSGIILGLIPITICGLFFTA) traverse the membrane as a helical segment.

This sequence belongs to the PetG family. The 4 large subunits of the cytochrome b6-f complex are cytochrome b6, subunit IV (17 kDa polypeptide, PetD), cytochrome f and the Rieske protein, while the 4 small subunits are PetG, PetL, PetM and PetN. The complex functions as a dimer.

It is found in the plastid. The protein localises to the chloroplast thylakoid membrane. Component of the cytochrome b6-f complex, which mediates electron transfer between photosystem II (PSII) and photosystem I (PSI), cyclic electron flow around PSI, and state transitions. PetG is required for either the stability or assembly of the cytochrome b6-f complex. The sequence is that of Cytochrome b6-f complex subunit 5 from Euglena gracilis.